Here is a 309-residue protein sequence, read N- to C-terminus: Homoserine O-succinyltransferase (309 aa).

Cysteine 142 acts as the Acyl-thioester intermediate in catalysis. Positions 163 and 192 each coordinate substrate. Histidine 235 (proton acceptor) is an active-site residue. Residue glutamate 237 is part of the active site. Substrate is bound at residue arginine 249.

Belongs to the MetA family. In terms of assembly, homodimer.

Its subcellular location is the cytoplasm. It catalyses the reaction L-homoserine + succinyl-CoA = O-succinyl-L-homoserine + CoA. The protein operates within amino-acid biosynthesis; L-methionine biosynthesis via de novo pathway; O-succinyl-L-homoserine from L-homoserine: step 1/1. Functionally, transfers a succinyl group from succinyl-CoA to L-homoserine, forming succinyl-L-homoserine. The protein is Homoserine O-succinyltransferase of Salmonella arizonae (strain ATCC BAA-731 / CDC346-86 / RSK2980).